The following is a 315-amino-acid chain: GTP cyclohydrolase MptA 1 (315 aa).

The protein belongs to the GTP cyclohydrolase IV family. As to quaternary structure, homodimer. Requires Fe(2+) as cofactor.

It carries out the reaction GTP + H2O = 7,8-dihydroneopterin 2',3'-cyclic phosphate + formate + diphosphate + H(+). The protein operates within cofactor biosynthesis; 5,6,7,8-tetrahydromethanopterin biosynthesis. In terms of biological role, converts GTP to 7,8-dihydro-D-neopterin 2',3'-cyclic phosphate, the first intermediate in the biosynthesis of coenzyme methanopterin. The protein is GTP cyclohydrolase MptA 1 of Methanocella arvoryzae (strain DSM 22066 / NBRC 105507 / MRE50).